Consider the following 488-residue polypeptide: Facilitated trehalose transporter Tret1-2 homolog (488 aa).

The Cytoplasmic portion of the chain corresponds to 1 to 28; it reads MKILMRADTHVSYSVPAEGTKANFTFSQ. Residues 29–49 form a helical membrane-spanning segment; that stretch reads VLAALSVSLCSLVVGFVSAYT. Residues 50 to 72 are Extracellular-facing; that stretch reads SPALVSMTDRTITSFEVTKDAGS. The helical transmembrane segment at 73 to 93 threads the bilayer; that stretch reads WVGGIMPLAALAGGITGGPLI. At 94–105 the chain is on the cytoplasmic side; it reads EYLGRRNTILAT. Residues 106-126 form a helical membrane-spanning segment; the sequence is AVPFIVSSLLIACAVNVIMIL. Residues 127–129 are Extracellular-facing; the sequence is CGR. A helical transmembrane segment spans residues 130–150; sequence FLTGFCVGIASLSLPVYLGET. Topologically, residues 151–160 are cytoplasmic; the sequence is LQPEVRGTLG. Residues 161 to 181 traverse the membrane as a helical segment; sequence LLPTALGNIGILVCYVAGSFM. The N-linked (GlcNAc...) asparagine glycan is linked to N182. At 182–184 the chain is on the extracellular side; the sequence is NWS. A helical transmembrane segment spans residues 185–205; sequence ILAFLGAALPVPFLILMIIIP. Residues 206–268 are Cytoplasmic-facing; that stretch reads ETPRWFVNRG…ELFKRINLKP (63 aa). The helical transmembrane segment at 269–289 threads the bilayer; the sequence is LSISLGLMFFQQFSGINAVIF. Residues 290-305 are Extracellular-facing; the sequence is YTVQIFKDAGSTIDSN. A helical transmembrane segment spans residues 306–326; that stretch reads LCTIIVGIVNFFATFMGIILI. At 327–332 the chain is on the cytoplasmic side; the sequence is DRLGRK. A helical transmembrane segment spans residues 333-353; it reads ILLYVSDIAMILTLSILGGFF. The Extracellular segment spans residues 354–372; the sequence is YCKAHGPDVSHLGWLPLSC. A helical membrane pass occupies residues 373–393; that stretch reads FVIYILGFSLGFGPIPWLMMG. The Cytoplasmic portion of the chain corresponds to 394–402; the sequence is EILPAKIRG. Residues 403 to 423 form a helical membrane-spanning segment; the sequence is PAASVVTAFNWFCTFVVTKTF. Residues 424–433 are Extracellular-facing; the sequence is QDLTVAMGPH. The chain crosses the membrane as a helical span at residues 434–454; the sequence is GAFWLFGVVCIVGLFFVIIYV. The Cytoplasmic portion of the chain corresponds to 455-488; it reads PETRGKSLEEIERKMMGRVPISAVVNIKPFSFNM.

This sequence belongs to the major facilitator superfamily. Sugar transporter (TC 2.A.1.1) family. Trehalose transporter subfamily.

It is found in the cell membrane. In terms of biological role, fails to transport trehalose. The sequence is that of Facilitated trehalose transporter Tret1-2 homolog from Drosophila sechellia (Fruit fly).